The sequence spans 198 residues: Photosystem I assembly protein Ycf4 (198 aa).

2 helical membrane passes run 35–57 and 70–92; these read WFYN…SSYI and IIFF…FSIN.

Belongs to the Ycf4 family.

It is found in the plastid. The protein resides in the chloroplast thylakoid membrane. Seems to be required for the assembly of the photosystem I complex. In Euglena gracilis, this protein is Photosystem I assembly protein Ycf4.